A 107-amino-acid polypeptide reads, in one-letter code: Homeobox protein HD-3 (107 aa).

Positions 6–65 (SKAPRTRMTAGQTRVLMSFFKDNPFPSTTAREKLSKVLGVGPRTVQIWFQNQRQKARGQA) form a DNA-binding region, homeobox.

It is found in the nucleus. This chain is Homeobox protein HD-3 (HD-3), found in Encephalitozoon cuniculi (strain GB-M1) (Microsporidian parasite).